Reading from the N-terminus, the 339-residue chain is Dihydroorotate dehydrogenase (quinone) (339 aa).

FMN is bound by residues 62-66 (AGMDK) and threonine 86. Lysine 66 contacts substrate. 111–115 (NRMGF) is a binding site for substrate. FMN-binding residues include asparagine 139 and asparagine 172. Asparagine 172 contributes to the substrate binding site. The active-site Nucleophile is serine 175. Asparagine 177 provides a ligand contact to substrate. FMN contacts are provided by lysine 217 and threonine 245. Residue 246–247 (NT) participates in substrate binding. FMN contacts are provided by residues glycine 268, glycine 297, and 318–319 (YS).

The protein belongs to the dihydroorotate dehydrogenase family. Type 2 subfamily. As to quaternary structure, monomer. The cofactor is FMN.

It is found in the cell membrane. The enzyme catalyses (S)-dihydroorotate + a quinone = orotate + a quinol. The protein operates within pyrimidine metabolism; UMP biosynthesis via de novo pathway; orotate from (S)-dihydroorotate (quinone route): step 1/1. Catalyzes the conversion of dihydroorotate to orotate with quinone as electron acceptor. This is Dihydroorotate dehydrogenase (quinone) from Shewanella pealeana (strain ATCC 700345 / ANG-SQ1).